Here is a 381-residue protein sequence, read N- to C-terminus: Probable tRNA sulfurtransferase (381 aa).

The region spanning 55–163 (GECLENLNKV…DDEAFIYHEK (109 aa)) is the THUMP domain. ATP is bound by residues 181–182 (LV), Lys265, Gly287, and Gln296.

This sequence belongs to the ThiI family.

It is found in the cytoplasm. The enzyme catalyses [ThiI sulfur-carrier protein]-S-sulfanyl-L-cysteine + a uridine in tRNA + 2 reduced [2Fe-2S]-[ferredoxin] + ATP + H(+) = [ThiI sulfur-carrier protein]-L-cysteine + a 4-thiouridine in tRNA + 2 oxidized [2Fe-2S]-[ferredoxin] + AMP + diphosphate. It catalyses the reaction [ThiS sulfur-carrier protein]-C-terminal Gly-Gly-AMP + S-sulfanyl-L-cysteinyl-[cysteine desulfurase] + AH2 = [ThiS sulfur-carrier protein]-C-terminal-Gly-aminoethanethioate + L-cysteinyl-[cysteine desulfurase] + A + AMP + 2 H(+). It participates in cofactor biosynthesis; thiamine diphosphate biosynthesis. Functionally, catalyzes the ATP-dependent transfer of a sulfur to tRNA to produce 4-thiouridine in position 8 of tRNAs, which functions as a near-UV photosensor. Also catalyzes the transfer of sulfur to the sulfur carrier protein ThiS, forming ThiS-thiocarboxylate. This is a step in the synthesis of thiazole, in the thiamine biosynthesis pathway. The sulfur is donated as persulfide by IscS. The chain is Probable tRNA sulfurtransferase from Methanobrevibacter smithii (strain ATCC 35061 / DSM 861 / OCM 144 / PS).